Reading from the N-terminus, the 123-residue chain is Cytochrome c-555 (123 aa).

Positions 1–27 (MDHKKTSIRTTALAALVLGAVAAPAFS) are cleaved as a signal peptide. Heme c-binding residues include Cys46, Cys49, His50, and Met86.

Binds 1 heme c group covalently per subunit.

This Methylococcus capsulatus (strain ATCC 33009 / NCIMB 11132 / Bath) protein is Cytochrome c-555.